The following is a 305-amino-acid chain: MPITLPATLPAFDVLTHEGVMVMTPERAARQDIRPLRIGLLNLMPKKIQTENQFARLIGATPLQIDFQLIRMTEHQTKNTAAEHMAAFYRPFQEVKHEKFDGLIITGAPIEHLDFSEVTYWDELCEVMDWTQTHVHSTFGVCWGGMAMIYHFHGVPKHMLAAKAFGCFRHRNVAPVSPYLRGFSDDFVIPVSRWTEMRQDEIDAAPGLRTLLASDEVGPCLVEDAGHRALYIFNHFEYDSDTLKQEYDRDIGNGKPINVPRNYYPDDDPTKPPLNRWRSHAHLLYGNWINEIYQSTPYDIQQIGR.

The active-site Acyl-thioester intermediate is Cys142. Residues Lys163 and Ser192 each contribute to the substrate site. His235 serves as the catalytic Proton acceptor. The active site involves Glu237. Arg249 contacts substrate.

Belongs to the MetA family.

The protein localises to the cytoplasm. The enzyme catalyses L-homoserine + acetyl-CoA = O-acetyl-L-homoserine + CoA. It functions in the pathway amino-acid biosynthesis; L-methionine biosynthesis via de novo pathway; O-acetyl-L-homoserine from L-homoserine: step 1/1. Functionally, transfers an acetyl group from acetyl-CoA to L-homoserine, forming acetyl-L-homoserine. This is Homoserine O-acetyltransferase from Cereibacter sphaeroides (strain ATCC 17025 / ATH 2.4.3) (Rhodobacter sphaeroides).